The primary structure comprises 425 residues: Endoplasmic reticulum junction formation protein lunapark (425 aa).

The N-myristoyl glycine moiety is linked to residue Gly2. At 2 to 45 the chain is on the cytoplasmic side; that stretch reads GGLFSRWRAKPSTVEVLENIDKEIQALEEFREKNQRLQKLWVGR. A coiled-coil region spans residues 15–41; sequence VEVLENIDKEIQALEEFREKNQRLQKL. The helical transmembrane segment at 46 to 66 threads the bilayer; sequence LIIYSSILYLFTCLIVYLWYL. Over 67 to 77 the chain is Lumenal; sequence PDEFTARLVMT. Residues 78 to 98 traverse the membrane as a helical segment; that stretch reads LPFFAFPLIIWTLRTVLIFFF. The Cytoplasmic portion of the chain corresponds to 99-425; it reads SKRTERNNEA…EPSEESLVTK (327 aa). Residues 101–128 are a coiled coil; sequence RTERNNEALDDLKSQKKKILEEVMEKET. Phosphoserine is present on residues Ser114, Ser153, Ser177, Ser182, and Ser194. The disordered stretch occupies residues 144 to 242; it reads KKAKEFEPPS…HPPGPPLARP (99 aa). A compositionally biased stretch (pro residues) spans 186–195; it reads GPPPQGPVSP. Thr211 bears the Phosphothreonine mark. Ser222 is subject to Phosphoserine. The segment at 271–296 adopts a C4-type; plays a role in ER morphology zinc-finger fold; it reads CQQCFSHNGMALKEEFEYIAFRCAYC. Phosphoserine is present on residues Ser316, Ser348, and Ser380. Residues 320–425 are disordered; the sequence is RQAVEGSSST…EPSEESLVTK (106 aa). Acidic residues predominate over residues 384-398; sequence EPAENQEETENEETS. Ser411 carries the post-translational modification Phosphoserine.

This sequence belongs to the lunapark family. Homodimer; homodimerization requires the C4-type zinc finger motif and decreases during mitosis in a phosphorylation-dependent manner. Myristoylated; myristoylation is necessary for the endoplasmic reticulum (ER) three-way ER tubular junction formation, but is not required neither for membrane translocation, membrane topology formation, nor for the specific localization to ER membranes. In terms of processing, phosphorylated. Phosphorylation occurs at Ser-177, Ser-182, Ser-222, Ser-316 and Ser-380 during interphase. Phosphorylation occurs at Ser-114, Ser-153, Ser-194, Thr-211 and Ser-348 during mitosis; these phosphorylations reduce both its homodimerization and the ER three-way tubular junction formation. Post-translationally, subject to proteasomal degradation following phosphorylation during mitosis. Expressed in most tissues at basal level, with reinforcement in distal limb buds, genital bud, and in parts of the central nervous system.

It localises to the endoplasmic reticulum membrane. Its function is as follows. Endoplasmic reticulum (ER)-shaping membrane protein that plays a role in determining ER morphology. Involved in the stabilization of nascent three-way ER tubular junctions within the ER network. May also play a role as a curvature-stabilizing protein within three-way ER tubular junction network. May be involved in limb and central nervous system development. In Mus musculus (Mouse), this protein is Endoplasmic reticulum junction formation protein lunapark.